We begin with the raw amino-acid sequence, 135 residues long: Histone H2A.4 (135 aa).

This sequence belongs to the histone H2A family. As to quaternary structure, the nucleosome is a histone octamer containing two molecules each of H2A, H2B, H3 and H4 assembled in one H3-H4 heterotetramer and two H2A-H2B heterodimers. The octamer wraps approximately 147 bp of DNA. In terms of tissue distribution, expressed preferentially in meristematic tissues of young seedlings, in stigma and ovary but not in pollen.

Its subcellular location is the nucleus. The protein localises to the chromosome. Core component of nucleosome. Nucleosomes wrap and compact DNA into chromatin, limiting DNA accessibility to the cellular machineries which require DNA as a template. Histones thereby play a central role in transcription regulation, DNA repair, DNA replication and chromosomal stability. DNA accessibility is regulated via a complex set of post-translational modifications of histones, also called histone code, and nucleosome remodeling. The chain is Histone H2A.4 (TH254) from Triticum aestivum (Wheat).